The chain runs to 493 residues: Transcript termination protein OPG145 (493 aa).

A Helicase ATP-binding domain is found at Met-100–Ser-256. Position 113–120 (Leu-113–Thr-120) interacts with ATP. Positions Asp-206–His-209 match the DESH box motif. A Helicase C-terminal domain is found at Ile-309–Gly-456.

This sequence belongs to the helicase family. Poxviruses subfamily. As to quaternary structure, interacts with OPG087. Might be part of a transcription complex composed at least of OPG087, OPG110, and OPG145.

It localises to the virion. Its function is as follows. DNA helicase which seems to act as a postreplicative transcription termination factor. Involved in ATP-dependent release of nascent RNA. Forms a stable complex with single-stranded DNA, and to a lesser extent RNA. This is Transcript termination protein OPG145 (OPG145) from Homo sapiens (Human).